Consider the following 189-residue polypeptide: Apolipoprotein D (189 aa).

The N-terminal stretch at 1–20 (MVPVLLLLPALAGLFGAAEG) is a signal peptide. Q21 carries the post-translational modification Pyrrolidone carboxylic acid. Intrachain disulfides connect C28–C134 and C61–C185. N-linked (GlcNAc...) asparagine glycosylation is found at N65 and N98.

Belongs to the calycin superfamily. Lipocalin family. As to quaternary structure, homodimer.

It localises to the secreted. APOD occurs in the macromolecular complex with lecithin-transport and binding of bilin. Appears to be able to transport a variety of ligands in a number of different contexts. The polypeptide is Apolipoprotein D (APOD) (Bos taurus (Bovine)).